The following is an 877-amino-acid chain: MRMSAGLSLLIPLWGRTFLLLLSVAVTQSRWPSEPSDAVRDWENQLEASMHSVLSDLHEAVPTVVGIPDGTAVVGRSFRVTIPTDLIASGGEIIKVSAAGKEALPSWLHWDPQSHTLEGLPLDTDKGVHYISVSAARLGANGSHVPQTSSVFSIEVYPEDHSEPQSVRAASPDPGEVVSSVCAADEPVTVLTVILDADLTKMIPKQRLDLLQRMQSFSEVELHNMKLVPVVNNRLFDMSAFMAGPGNAKKVIENGALLSWKLGCSLNQNSVPDIHGVEVPAREGAMSAQLGYPVVGWHIANKKPPLPKRIRRQIHATPTPVTAIGPPTTAIQEPPSRIVPTPTSPAIAPPTETMAPPVRDPVPGKPTVTIRTRGAIFQTPTLGPIQPTRVSEAGTTVPGHIRPTMTIPGYLEPTAVATPPTPTTKNPRVSXPTKKPRTPRPVPRVTTKAPITRLETASPPTRIRTTTSGLPRGEPNQRPELKNHIDRVDAWVGTYFEVKIPSDTFYDNEDTTTDKLKLTLKLREQQLVGVKSWVQFNSNSQLMYGLPDSSHVGKHEYFMHATDKGGLSAVDAFEIHVHRRPQGDRAPARFTAKFVGDPAPVVNDIHKKIALVKKLAFAFGDRNCSTITLQNITRGSIVVEWTNNTLPLEPCPKEQITGLSRRIAEDDGKPRAAFSNALEPDFKAMSIAVTGSGSCRHLQFVPVAPPKRVPSEAPPTEVPDRDPEKSSEDDVYLHTVIPAVVVAAILLIAGIIAMICYRKKRKGKLTLEDQATFIKKGVPIIFADELDDSKPPPSSSMPLILQEEKAPLPPPEYPNQSVPETTPLNQDTVGEYTPLRDEDPNAPPYQPPPPFTAPMEGKGSRPKNMTPYRSPPPYVPP.

The signal sequence occupies residues 1–29 (MRMSAGLSLLIPLWGRTFLLLLSVAVTQS). The required for laminin recognition stretch occupies residues 30–408 (RWPSEPSDAV…GHIRPTMTIP (379 aa)). The segment at 49 to 71 (SMHSVLSDLHEAVPTVVGIPDGT) is O-glycosylated at one site. Residue N141 is glycosylated (N-linked (GlcNAc...) asparagine). Residues C182 and C264 are joined by a disulfide bond. The tract at residues 316-468 (ATPTPVTAIG…PPTRIRTTTS (153 aa)) is mucin-like domain. T317, T319, and T379 each carry an O-linked (Man6P...) threonine glycan. 2 disordered regions span residues 380–444 (PTLG…PVPR) and 458–480 (SPPT…QRPE). The span at 413 to 433 (PTAVATPPTPTTKNPRVSXPT) shows a compositional bias: low complexity. Residues 446-468 (TTKAPITRLETASPPTRIRTTTS) are O-glycosylated at seven sites with GalNAc. The Peptidase S72 domain maps to 585-694 (RAPARFTAKF…MSIAVTGSGS (110 aa)). N623, N631, and N643 each carry an N-linked (GlcNAc...) asparagine glycan. A disulfide bridge links C651 with C695. Residues 706–717 (PKRVPSEAPPTE) are compositionally biased toward pro residues. Residues 706-727 (PKRVPSEAPPTEVPDRDPEKSS) are disordered. Over residues 718 to 727 (VPDRDPEKSS) the composition is skewed to basic and acidic residues. A helical membrane pass occupies residues 732 to 757 (YLHTVIPAVVVAAILLIAGIIAMICY). A Nuclear localization signal motif is present at residues 758–764 (RKKRKGK). T772 is subject to Phosphothreonine. The required for interaction with CAV3 stretch occupies residues 801 to 877 (LQEEKAPLPP…YRSPPPYVPP (77 aa)). The tract at residues 805-877 (KAPLPPPEYP…YRSPPPYVPP (73 aa)) is disordered. Residues 814–828 (PNQSVPETTPLNQDT) are compositionally biased toward polar residues. The span at 841 to 852 (NAPPYQPPPPFT) shows a compositional bias: pro residues. The interval 862–877 (PKNMTPYRSPPPYVPP) is required for binding DMD and UTRN. A PPXY motif motif is present at residues 871–874 (PPPY). Y874 is subject to Phosphotyrosine; by SRC.

Monomer. Heterodimer of alpha- and beta-dystroglycan subunits which are the central components of the dystrophin-glycoprotein complex. This complex then can form a dystrophin-associated glycoprotein complex (DGC) which is composed of three subcomplexes: a cytoplasmic complex comprised of DMD (or UTRN), DTNA and a number of syntrophins, such as SNTB1, SNTB2, SNTG1 and SNTG2, the transmembrane dystroglycan complex, and the sarcoglycan-sarcospan complex. Interacts (via the N-terminal of alphaDAG1) with LARGE1; the interaction enhances laminin binding. Interacts with SGCD. Interacts with AGR2 and AGR3. Interacts (betaDAG1) with DMD; the interaction is inhibited by phosphorylation on the PPXY motif. Interacts (betaDAG1, via its PPXY motif) with UTRN (via its WWW and ZZ domains); the interaction is inhibited by phosphorylation on the PPXY motif. Interacts (betaDAG1, via its phosphorylated PPXY motif) with the SH2 domain-containing proteins, FYN, CSK, NCK and SHC. Interacts (betaDAG1) with CAV3 (via a central WW-like domain); the interaction disrupts the binding of DMD. BetaDAG1 directly interacts with ANK3, but not with ANK2; this interaction does not interfere with DMD-binding and is required for retention at costameres. Identified in a dystroglycan complex that contains at least PRX, DRP2, UTRN, DMD and DAG1. Interacts with POMGNT1. BetaDAG1 interacts with CD93. O-glycosylated. POMGNT1 catalyzes the initial addition of N-acetylglucosamine, giving rise to the GlcNAc(beta1-2)Man(alpha1-)O-Ser/Thr moiety and thus providing the necessary basis for the addition of further carbohydrate moieties. Heavily O-glycosylated comprising of up to two thirds of its mass and the carbohydrate composition differs depending on tissue type. Mucin-type O-glycosylation is important for ligand binding activity. O-mannosylation of alpha-DAG1 is found in high abundance in both brain and muscle where the most abundant glycan is Sia-alpha-2-3-Gal-beta-1-4-Glc-NAc-beta-1-2-Man. In muscle, glycosylation on Thr-317, Thr-319 and Thr-379 by a phosphorylated O-mannosyl glycan with the structure 2-(N-acetylamido)-2-deoxygalactosyl-beta-1,3-2-(N-acetylamido)-2-deoxyglucosyl-beta-1,4-6-phosphomannose is mediated by like-acetylglucosaminyltransferase (LARGE1) protein amd is required for laminin binding. O-glycosylated in the N-terminal region with a core 1 or possibly core 8 glycan. The brain form displays a unique glycosylation pattern which is absent in other tissues; this form shows enhanced binding to laminin LAMA5 compared to the skeletal muscle form. Post-translationally, N-glycosylated. In terms of processing, autolytic cleavage produces the alpha and beta subunits. In cutaneous cells, as well as in certain pathological conditions, shedding of beta-dystroglycan can occur releasing a peptide of about 30 kDa. SRC-mediated phosphorylation of the PPXY motif of the beta subunit recruits SH2 domain-containing proteins, but inhibits binding to WWW domain-containing proteins, DMD and UTRN. This phosphorylation also inhibits nuclear entry.

It is found in the secreted. The protein resides in the extracellular space. The protein localises to the cell membrane. Its subcellular location is the cytoplasm. It localises to the cytoskeleton. It is found in the nucleus. The protein resides in the nucleoplasm. The protein localises to the sarcolemma. Its subcellular location is the postsynaptic cell membrane. Its function is as follows. The dystroglycan complex is involved in a number of processes including laminin and basement membrane assembly, sarcolemmal stability, cell survival, peripheral nerve myelination, nodal structure, cell migration, and epithelial polarization. Functionally, extracellular peripheral glycoprotein that acts as a receptor for extracellular matrix proteins containing laminin-G domains. Receptor for laminin-2 (LAMA2) and agrin in peripheral nerve Schwann cells. Also acts as a receptor for laminin LAMA5. In terms of biological role, transmembrane protein that plays important roles in connecting the extracellular matrix to the cytoskeleton. Acts as a cell adhesion receptor in both muscle and non-muscle tissues. Receptor for both DMD and UTRN and, through these interactions, scaffolds axin to the cytoskeleton. Also functions in cell adhesion-mediated signaling and implicated in cell polarity. This Sus scrofa (Pig) protein is Dystroglycan 1.